A 535-amino-acid polypeptide reads, in one-letter code: T-complex protein 1 subunit zeta 2 (535 aa).

The protein belongs to the TCP-1 chaperonin family. As to quaternary structure, heterooligomeric complex of about 850 to 900 kDa that forms two stacked rings, 12 to 16 nm in diameter.

The protein localises to the cytoplasm. Its function is as follows. Molecular chaperone; assists the folding of proteins upon ATP hydrolysis. Known to play a role, in vitro, in the folding of actin and tubulin. The chain is T-complex protein 1 subunit zeta 2 from Arabidopsis thaliana (Mouse-ear cress).